The chain runs to 323 residues: NADH-ubiquinone oxidoreductase chain 1 (323 aa).

8 consecutive transmembrane segments (helical) span residues 8–28 (LLNP…LTLI), 74–94 (LLFI…WLPL), 105–125 (LGML…LGSG), 150–170 (SLGL…LTTF), 176–196 (TIWL…STLA), 227–247 (LFFL…TILF), 258–278 (ELTS…FLWV), and 298–318 (FLPI…FTGS).

The protein belongs to the complex I subunit 1 family.

The protein localises to the mitochondrion inner membrane. The catalysed reaction is a ubiquinone + NADH + 5 H(+)(in) = a ubiquinol + NAD(+) + 4 H(+)(out). Core subunit of the mitochondrial membrane respiratory chain NADH dehydrogenase (Complex I) that is believed to belong to the minimal assembly required for catalysis. Complex I functions in the transfer of electrons from NADH to the respiratory chain. The immediate electron acceptor for the enzyme is believed to be ubiquinone. The polypeptide is NADH-ubiquinone oxidoreductase chain 1 (MT-ND1) (Latimeria chalumnae (Coelacanth)).